Here is an 881-residue protein sequence, read N- to C-terminus: Valine--tRNA ligase (881 aa).

The 'HIGH' region motif lies at 49-59 (PNVTGKLHLGH). A 'KMSKS' region motif is present at residues 526-530 (KMSKS). Lys-529 is a binding site for ATP. Residues 810 to 881 (LADLINLDEE…VRQRLADLEK (72 aa)) are a coiled coil.

This sequence belongs to the class-I aminoacyl-tRNA synthetase family. ValS type 1 subfamily. In terms of assembly, monomer.

The protein resides in the cytoplasm. It catalyses the reaction tRNA(Val) + L-valine + ATP = L-valyl-tRNA(Val) + AMP + diphosphate. Catalyzes the attachment of valine to tRNA(Val). As ValRS can inadvertently accommodate and process structurally similar amino acids such as threonine, to avoid such errors, it has a 'posttransfer' editing activity that hydrolyzes mischarged Thr-tRNA(Val) in a tRNA-dependent manner. The chain is Valine--tRNA ligase from Bacillus anthracis.